Here is a 96-residue protein sequence, read N- to C-terminus: Large ribosomal subunit protein bL27 (96 aa).

The propeptide occupies methionine 1–phenylalanine 9.

Belongs to the bacterial ribosomal protein bL27 family. In terms of processing, the N-terminus is cleaved by ribosomal processing cysteine protease Prp.

The chain is Large ribosomal subunit protein bL27 from Geobacillus kaustophilus (strain HTA426).